A 662-amino-acid polypeptide reads, in one-letter code: Glycine--tRNA ligase beta subunit (662 aa).

It belongs to the class-II aminoacyl-tRNA synthetase family. As to quaternary structure, tetramer of two alpha and two beta subunits.

It localises to the cytoplasm. The catalysed reaction is tRNA(Gly) + glycine + ATP = glycyl-tRNA(Gly) + AMP + diphosphate. The polypeptide is Glycine--tRNA ligase beta subunit (Rickettsia akari (strain Hartford)).